The following is a 578-amino-acid chain: MAAARLAAALLLLAAQVACEFGVLRVVSQTSRTRSRDYCILYNPQWAHLPHDLSKVSLLKLRDLSTTQLCSYLDVPAEDFTNQIALVARGNCTFYEKVRLAQGSGAHGLLIVSKEKLVPPGGNKTQYEEISIPVALLSHRDLQDIFRRFGREVMVALYAPSEPVMDYNMVIIFVMAVGTVAIGGYWAGSHDVKKYMKHKRDDGPEKQEDEAVDVTPVMICVFVVMCCFMLVLLYYFYDRLVYVIIGIFCLASSTGLYSCLAPFVRKLPFCTCRVPDNNLPYFHKRPQARMLLLALFCVTVSVVWGIFRNEDQWAWVLQDTLGIAFCLYMLKTIRLPTFKACTLLLLVLFIYDIFFVFITPFLTKSGNSIMVEVATGPSNSSTHEKLPMVLKVPRLNTSPLSLCDRPFSLLGFGDILVPGLLVAYCHRFDIQVQSSRIYFVACTIAYGLGLLVTFVALVLMQRGQPALLYLVPCTLLTSCTVALWRRELGAFWTGSGFAKDAPQTPWAATQGPVPPKAVGSSLSEQPPSEELAKSPLSTEEAGAADPAKDPDNPVASPLSPSNGDEAQPIPVVKPETSA.

Positions 1-19 are cleaved as a signal peptide; it reads MAAARLAAALLLLAAQVAC. Topologically, residues 20–168 are lumenal; it reads EFGVLRVVSQ…APSEPVMDYN (149 aa). Positions 61–145 constitute a PA domain; it reads LRDLSTTQLC…LLSHRDLQDI (85 aa). Asn-91 and Asn-123 each carry an N-linked (GlcNAc...) asparagine glycan. The helical transmembrane segment at 169–189 threads the bilayer; it reads MVIIFVMAVGTVAIGGYWAGS. Topologically, residues 190–216 are cytoplasmic; that stretch reads HDVKKYMKHKRDDGPEKQEDEAVDVTP. Residues 217-237 traverse the membrane as a helical segment; that stretch reads VMICVFVVMCCFMLVLLYYFY. At 238–239 the chain is on the lumenal side; that stretch reads DR. Residues 240-260 form a helical membrane-spanning segment; it reads LVYVIIGIFCLASSTGLYSCL. Topologically, residues 261–286 are cytoplasmic; sequence APFVRKLPFCTCRVPDNNLPYFHKRP. The chain crosses the membrane as a helical span at residues 287 to 307; the sequence is QARMLLLALFCVTVSVVWGIF. Over 308–312 the chain is Lumenal; it reads RNEDQ. The helical transmembrane segment at 313 to 333 threads the bilayer; it reads WAWVLQDTLGIAFCLYMLKTI. Topologically, residues 334–341 are cytoplasmic; the sequence is RLPTFKAC. The helical transmembrane segment at 342–362 threads the bilayer; the sequence is TLLLLVLFIYDIFFVFITPFL. Asp-352 is a catalytic residue. Topologically, residues 363 to 405 are lumenal; it reads TKSGNSIMVEVATGPSNSSTHEKLPMVLKVPRLNTSPLSLCDR. Residues 406 to 426 form a helical membrane-spanning segment; it reads PFSLLGFGDILVPGLLVAYCH. Asp-414 is a catalytic residue. The Cytoplasmic segment spans residues 427–438; it reads RFDIQVQSSRIY. Residues 439–459 traverse the membrane as a helical segment; it reads FVACTIAYGLGLLVTFVALVL. Over 460–463 the chain is Lumenal; sequence MQRG. A helical membrane pass occupies residues 464–484; the sequence is QPALLYLVPCTLLTSCTVALW. The PAL signature appears at 465–467; it reads PAL. Residues 485–578 are Cytoplasmic-facing; the sequence is RRELGAFWTG…IPVVKPETSA (94 aa). The disordered stretch occupies residues 502–578; that stretch reads PQTPWAATQG…IPVVKPETSA (77 aa). The span at 520-529 shows a compositional bias: low complexity; that stretch reads SSLSEQPPSE.

It belongs to the peptidase A22B family. As to quaternary structure, monomer. Homodimer. Interacts with ITM2B and TNF. Post-translationally, glycosylated.

The protein localises to the cell membrane. It localises to the golgi apparatus membrane. The protein resides in the lysosome membrane. Its subcellular location is the endosome membrane. It is found in the membrane. Its function is as follows. Intramembrane-cleaving aspartic protease (I-CLiP) that cleaves type II membrane signal peptides in the hydrophobic plane of the membrane. Functions in ITM2B and TNF processing. Catalyzes the intramembrane cleavage of the anchored fragment of shed TNF-alpha (TNF), which promotes the release of the intracellular domain (ICD) for signaling to the nucleus. May play a role in the regulation of innate and adaptive immunity. The chain is Signal peptide peptidase-like 2B from Mus musculus (Mouse).